The chain runs to 411 residues: E3 ubiquitin-protein ligase PUB23 (411 aa).

Positions 11 to 86 (EIPPFFLCPI…QSWCTLNASY (76 aa)) constitute a U-box domain. ARM repeat units follow at residues 132-173 (ATNK…HLET), 175-203 (ETVL…RGMY), 221-261 (DPMQ…NICP), and 263-306 (GRNR…LLCQ).

In terms of assembly, interacts with RPN12A. In terms of processing, auto-ubiquitinated.

It is found in the cytoplasm. The catalysed reaction is S-ubiquitinyl-[E2 ubiquitin-conjugating enzyme]-L-cysteine + [acceptor protein]-L-lysine = [E2 ubiquitin-conjugating enzyme]-L-cysteine + N(6)-ubiquitinyl-[acceptor protein]-L-lysine.. The protein operates within protein modification; protein ubiquitination. Its function is as follows. E3 ubiquitin-protein ligase that negatively regulates water stress response. May control in coordination with PUB23 a drought signaling pathway by ubiquitinating cytosolic RPN12a. Acts as a negative regulator of the immunity triggered by the pathogen-associated molecular patterns (PAMPs), in association with PUB22 and PUB24. In Arabidopsis thaliana (Mouse-ear cress), this protein is E3 ubiquitin-protein ligase PUB23 (PUB23).